The following is a 1274-amino-acid chain: Myosin-binding protein C, cardiac-type (1274 aa).

At Met-1 the chain carries N-acetylmethionine. Residues 8-95 (PVSAFTKKPR…SKVKFDLKVT (88 aa)) form the Ig-like C2-type 1 domain. At Ser-47 the chain carries Phosphoserine. The segment covering 95–104 (TEPAPPEKAE) has biased composition (basic and acidic residues). The tract at residues 95–153 (TEPAPPEKAESAVAPTSMEAPETPKEVPALATQLEGNVSSPEGSVSVTQDGSVAGSQGA) is disordered. Thr-117 is subject to Phosphothreonine. Polar residues predominate over residues 128–149 (LEGNVSSPEGSVSVTQDGSVAG). Residues 157–259 (PIGLFLMRPQ…KFDSCNFNLT (103 aa)) form the Ig-like C2-type 2 domain. The Zn(2+) site is built by Gln-212, His-214, Glu-227, and His-229. The residue at position 279 (Ser-279) is a Phosphoserine. Thr-287 is subject to Phosphothreonine; by PKA and PKC. The residue at position 288 (Ser-288) is a Phosphoserine. Residue Ser-307 is modified to Phosphoserine; by PKA. Residues Ser-312 and Ser-427 each carry the phosphoserine modification. 2 Ig-like C2-type domains span residues 361–452 (KKST…VKEP) and 452–546 (PPVL…KKLE). An intrachain disulfide couples Cys-436 to Cys-443. A phosphoserine mark is found at Ser-459 and Ser-550. At Thr-607 the chain carries Phosphothreonine. In terms of domain architecture, Ig-like C2-type 5 spans 645-765 (PKIHLDCPGS…PVGEDQVNLT (121 aa)). Fibronectin type-III domains are found at residues 774–870 (APAA…IGPP) and 872–967 (EPTH…VQEI). Residues 971–1059 (PRLQLPRHLR…ENMEDKATLV (89 aa)) enclose the Ig-like C2-type 6 domain. Positions 1068–1163 (PPLDIRVVET…TKEPIFIPRP (96 aa)) constitute a Fibronectin type-III 3 domain. The Ig-like C2-type 7 domain maps to 1181 to 1269 (PSFTQPLTNR…GEAQCECRLE (89 aa)). An Omega-N-methylarginine modification is found at Arg-1241.

This sequence belongs to the immunoglobulin superfamily. MyBP family. Substrate for phosphorylation by PKA and PKC. Reversible phosphorylation appears to modulate contraction. In terms of processing, polyubiquitinated.

In terms of biological role, thick filament-associated protein located in the crossbridge region of vertebrate striated muscle a bands. In vitro it binds MHC, F-actin and native thin filaments, and modifies the activity of actin-activated myosin ATPase. It may modulate muscle contraction or may play a more structural role. This chain is Myosin-binding protein C, cardiac-type (Mybpc3), found in Rattus norvegicus (Rat).